The chain runs to 151 residues: Putative pre-16S rRNA nuclease (151 aa).

This sequence belongs to the YqgF nuclease family.

It localises to the cytoplasm. Its function is as follows. Could be a nuclease involved in processing of the 5'-end of pre-16S rRNA. This is Putative pre-16S rRNA nuclease from Nitrosospira multiformis (strain ATCC 25196 / NCIMB 11849 / C 71).